The primary structure comprises 361 residues: Divinyl chlorophyll a/b light-harvesting protein PcbD (361 aa).

The next 6 helical transmembrane spans lie at 27–47, 93–113, 140–160, 201–221, 248–268, and 315–335; these read FIAS…GSTL, IVHL…GILF, FILG…VEWA, VMGG…FHIV, AVLS…AFWC, and LTNV…WHAL.

The protein belongs to the PsbB/PsbC family. IsiA/Pcb subfamily. The antenna complex consists of divinyl chlorophylls (a and b) and divinyl chlorophyll a/b binding proteins and binds more divinyl chlorophyll b than does the antenna complex from high-light-adapted Prochlorococcus. Divinyl chlorophyll a serves as cofactor. It depends on divinyl chlorophyll b as a cofactor.

It is found in the cellular thylakoid membrane. Functionally, the antenna complex functions as a light receptor, it captures and delivers excitation energy to photosystems II and I. The Prochlorales pcb genes are not related to higher plant LHCs. The protein is Divinyl chlorophyll a/b light-harvesting protein PcbD (pcbD) of Prochlorococcus marinus (strain SARG / CCMP1375 / SS120).